Consider the following 356-residue polypeptide: Fructose-1,6-bisphosphatase class 1 1 (356 aa).

Positions 106, 129, 131, and 132 each coordinate Mg(2+). Residues 132–135, Asn225, Tyr258, and Lys288 contribute to the substrate site; that span reads DGSS. A Mg(2+)-binding site is contributed by Glu294.

The protein belongs to the FBPase class 1 family. In terms of assembly, homotetramer. Mg(2+) is required as a cofactor.

It is found in the cytoplasm. It carries out the reaction beta-D-fructose 1,6-bisphosphate + H2O = beta-D-fructose 6-phosphate + phosphate. Its pathway is carbohydrate biosynthesis; gluconeogenesis. This chain is Fructose-1,6-bisphosphatase class 1 1, found in Salinibacter ruber (strain DSM 13855 / M31).